The chain runs to 147 residues: CRISP-1 (147 aa).

It belongs to the CRISP family. Expressed by the venom gland.

The protein resides in the secreted. The chain is CRISP-1 from Phoneutria keyserlingi (Brazilian wandering spider).